We begin with the raw amino-acid sequence, 514 residues long: Na(+)/H(+) antiporter NhaB (514 aa).

A run of 12 helical transmembrane segments spans residues 23-43 (LALLVFLIVNPFIFLANPFIA), 63-83 (PLLPGGLLAIEAVIIGMTSAA), 97-117 (LLLMFMVAGIYFMKQLLLFIF), 120-140 (LLLSIRSKMVLSLAFCVAAAF), 144-164 (FLDALTVVAVVISVAVGFYGI), 202-222 (LMMHAGVGTALGGVMTMVGEP), 238-258 (FFLRMSPVTVPVLVCGLLTCM), 303-323 (AVIGVWLVTALALHLAEVGLI), 357-377 (LTVFFSIVAVIIDQHLFAPII), 391-411 (LFYLFNGLLSSISDNVFVGTI), 447-467 (ATPNGQAAFLFLLTSALAPLI), and 475-495 (VWMALPYTIVLTLIGLLCVEF).

Belongs to the NhaB Na(+)/H(+) (TC 2.A.34) antiporter family.

The protein localises to the cell inner membrane. The catalysed reaction is 2 Na(+)(in) + 3 H(+)(out) = 2 Na(+)(out) + 3 H(+)(in). Functionally, na(+)/H(+) antiporter that extrudes sodium in exchange for external protons. The protein is Na(+)/H(+) antiporter NhaB of Salmonella choleraesuis (strain SC-B67).